Reading from the N-terminus, the 222-residue chain is Protein-L-isoaspartate O-methyltransferase (222 aa).

The active site involves S69.

Belongs to the methyltransferase superfamily. L-isoaspartyl/D-aspartyl protein methyltransferase family.

The protein resides in the cytoplasm. The enzyme catalyses [protein]-L-isoaspartate + S-adenosyl-L-methionine = [protein]-L-isoaspartate alpha-methyl ester + S-adenosyl-L-homocysteine. Its function is as follows. Catalyzes the methyl esterification of L-isoaspartyl residues in peptides and proteins that result from spontaneous decomposition of normal L-aspartyl and L-asparaginyl residues. It plays a role in the repair and/or degradation of damaged proteins. The sequence is that of Protein-L-isoaspartate O-methyltransferase from Caulobacter vibrioides (strain NA1000 / CB15N) (Caulobacter crescentus).